Here is a 323-residue protein sequence, read N- to C-terminus: RING-H2 finger protein ATL32 (323 aa).

A signal peptide spans M1–A28. A helical membrane pass occupies residues T47–I67. The RING-type; atypical zinc-finger motif lies at C124–R166. The tract at residues S210 to R229 is disordered.

The protein belongs to the RING-type zinc finger family. ATL subfamily.

The protein localises to the membrane. It carries out the reaction S-ubiquitinyl-[E2 ubiquitin-conjugating enzyme]-L-cysteine + [acceptor protein]-L-lysine = [E2 ubiquitin-conjugating enzyme]-L-cysteine + N(6)-ubiquitinyl-[acceptor protein]-L-lysine.. It functions in the pathway protein modification; protein ubiquitination. This chain is RING-H2 finger protein ATL32 (ATL32), found in Arabidopsis thaliana (Mouse-ear cress).